A 574-amino-acid chain; its full sequence is Proline--tRNA ligase (574 aa).

Belongs to the class-II aminoacyl-tRNA synthetase family. ProS type 1 subfamily. In terms of assembly, homodimer.

Its subcellular location is the cytoplasm. It catalyses the reaction tRNA(Pro) + L-proline + ATP = L-prolyl-tRNA(Pro) + AMP + diphosphate. Functionally, catalyzes the attachment of proline to tRNA(Pro) in a two-step reaction: proline is first activated by ATP to form Pro-AMP and then transferred to the acceptor end of tRNA(Pro). As ProRS can inadvertently accommodate and process non-cognate amino acids such as alanine and cysteine, to avoid such errors it has two additional distinct editing activities against alanine. One activity is designated as 'pretransfer' editing and involves the tRNA(Pro)-independent hydrolysis of activated Ala-AMP. The other activity is designated 'posttransfer' editing and involves deacylation of mischarged Ala-tRNA(Pro). The misacylated Cys-tRNA(Pro) is not edited by ProRS. The chain is Proline--tRNA ligase from Aeromonas hydrophila subsp. hydrophila (strain ATCC 7966 / DSM 30187 / BCRC 13018 / CCUG 14551 / JCM 1027 / KCTC 2358 / NCIMB 9240 / NCTC 8049).